The sequence spans 227 residues: uncharacterized protein (227 aa).

Its subcellular location is the virion. This is an uncharacterized protein from Acanthamoeba polyphaga (Amoeba).